A 537-amino-acid polypeptide reads, in one-letter code: Cytochrome P450 27C1 (537 aa).

Cysteine 483 provides a ligand contact to heme.

It belongs to the cytochrome P450 family. The cofactor is heme. As to expression, expressed in the dorsal third of retinal pigment epithelium, but not in the ventral counterpart (at protein level).

Its subcellular location is the membrane. The catalysed reaction is all-trans-retinol + 2 reduced [adrenodoxin] + O2 + 2 H(+) = all-trans-3,4-didehydroretinol + 2 oxidized [adrenodoxin] + 2 H2O. In terms of biological role, efficiently catalyzes the conversion of all-trans retinol (also called vitamin A1, the precursor of 11-cis retinal) to 3,4-didehydroretinol (also called vitamin A2, the precursor of 11-cis 3,4-didehydroretinal), also acts on all-trans retinal and all-trans retinoic acid. The replacement of 11-cis retinal chromophore in photopigments with 11-cis 3,4-didehydroretinal enhances sensitivity to long-wavelength light. This may improve vision in fresh water which is often turbid. The protein is Cytochrome P450 27C1 (cyp27c1) of Aquarana catesbeiana (American bullfrog).